The chain runs to 413 residues: Aspartate aminotransferase, cytoplasmic (413 aa).

2 residues coordinate L-aspartate: glycine 39 and tryptophan 141. Serine 149 bears the Phosphoserine mark. Asparagine 195 is an L-aspartate binding site. Lysine 259 bears the N6-(pyridoxal phosphate)lysine mark. Position 318 is an N6-succinyllysine (lysine 318). Arginine 387 contributes to the L-aspartate binding site.

It belongs to the class-I pyridoxal-phosphate-dependent aminotransferase family. Homodimer. It depends on pyridoxal 5'-phosphate as a cofactor. Expressed in neurons of the retina. Localizes to the inner and outer plexiform layers, the inner and outer nuclear layer and the outer segments of photoreceptors.

The protein localises to the cytoplasm. The enzyme catalyses L-aspartate + 2-oxoglutarate = oxaloacetate + L-glutamate. It carries out the reaction L-cysteine + 2-oxoglutarate = 2-oxo-3-sulfanylpropanoate + L-glutamate. The catalysed reaction is (2S)-2-aminobutanoate + 2-oxoglutarate = 2-oxobutanoate + L-glutamate. It catalyses the reaction 3-sulfino-L-alanine + 2-oxoglutarate = 3-sulfinopyruvate + L-glutamate. Its activity is regulated as follows. Inhibited by calcium ions. Its function is as follows. Biosynthesis of L-glutamate from L-aspartate or L-cysteine. Important regulator of levels of glutamate, the major excitatory neurotransmitter of the vertebrate central nervous system. Acts as a scavenger of glutamate in brain neuroprotection. The aspartate aminotransferase activity is involved in hepatic glucose synthesis during development and in adipocyte glyceroneogenesis. Using L-cysteine as substrate, regulates levels of mercaptopyruvate, an important source of hydrogen sulfide. Mercaptopyruvate is converted into H(2)S via the action of 3-mercaptopyruvate sulfurtransferase (3MST). Hydrogen sulfide is an important synaptic modulator and neuroprotectant in the brain. This is Aspartate aminotransferase, cytoplasmic from Mus musculus (Mouse).